The following is a 133-amino-acid chain: DNA-directed RNA polymerase subunit omega (133 aa).

This sequence belongs to the RNA polymerase subunit omega family. As to quaternary structure, the RNAP catalytic core consists of 2 alpha, 1 beta, 1 beta' and 1 omega subunit. When a sigma factor is associated with the core the holoenzyme is formed, which can initiate transcription.

It carries out the reaction RNA(n) + a ribonucleoside 5'-triphosphate = RNA(n+1) + diphosphate. In terms of biological role, promotes RNA polymerase assembly. Latches the N- and C-terminal regions of the beta' subunit thereby facilitating its interaction with the beta and alpha subunits. The sequence is that of DNA-directed RNA polymerase subunit omega from Brucella canis (strain ATCC 23365 / NCTC 10854 / RM-666).